A 2605-amino-acid chain; its full sequence is Non-reducing polyketide synthase dbaI (2605 aa).

Positions 97 to 243 are N-terminal acylcarrier protein transacylase domain (SAT); it reads PNTLLIPLVM…PASEISDLHR (147 aa). Residue C144 is the Nucleophile; for transacylase activity of the active site. Catalysis depends on H262, which acts as the Proton donor/acceptor; for transacylase activity. One can recognise a Ketosynthase family 3 (KS3) domain in the interval 382–798; it reads ENDIAVVGMS…GSNASIVVTQ (417 aa). Residues C547, H682, and H721 each act as for beta-ketoacyl synthase activity in the active site. The malonyl-CoA:ACP transacylase (MAT) domain stretch occupies residues 908–1195; sequence FGGQVSTFVG…VTNMASRALG (288 aa). Residues 1285-1420 form an N-terminal hotdog fold region; sequence PNTLLTFVGY…GRVIFRSISD (136 aa). One can recognise a PKS/mFAS DH domain in the interval 1285-1596; that stretch reads PNTLLTFVGY…YVKIPKASMS (312 aa). Residues 1316-1594 form a product template (PT) domain region; sequence LIRGHIIAQT…ISYVKIPKAS (279 aa). H1320 functions as the Proton acceptor; for dehydratase activity in the catalytic mechanism. Residues 1447–1596 form a C-terminal hotdog fold region; sequence EVDEVLQNRN…YVKIPKASMS (150 aa). D1504 functions as the Proton donor; for dehydratase activity in the catalytic mechanism. The region spanning 1665–1739 is the Carrier domain; the sequence is GQLTQRIKSI…SLIKCVRKAM (75 aa). Position 1699 is an O-(pantetheine 4'-phosphoryl)serine (S1699). The interval 1742–1780 is disordered; sequence DADSAEYTTEQSTSEAADSDDKSTNYTTPSTPGEEALDM. Over residues 1747–1757 the composition is skewed to polar residues; it reads EYTTEQSTSEA. The segment at 1963-2151 is methyltransferase domain; sequence DWPLNRLFYR…VGYGHVDWTD (189 aa). Residues 2230-2473 are NADPH-binding (R) domain; that stretch reads VTGATGSLGC…LSWTPVDVVA (244 aa).

The enzyme catalyses 4 malonyl-CoA + acetyl-CoA + AH2 + S-adenosyl-L-methionine + 3 H(+) = 2,4-dihydroxy-3-methyl-6-(2-oxopropyl)benzaldehyde + A + S-adenosyl-L-homocysteine + 4 CO2 + 5 CoA + H2O. It functions in the pathway secondary metabolite biosynthesis. Non-reducing polyketide synthase; part of the gene cluster that mediates the biosynthesis of the antibiotic 2,4-dihydroxy-3-methyl-6-(2-oxopropyl)benzaldehyde (DHMBA) and its derivatives. The direct non-reducing polyketide synthase dbaI product is 2,4-dihydroxy-3-methyl-6-(2-oxopropyl)benzaldehyde (DHMBA), produced by condensation of one acetyl-CoA starter unit with 4 malonyl-CoA units and one methylation step. The FAD-dependent monooxygenase dbaH is responsible for the synthesis of yellow pigments derived from the oxidation of DHMBA. The roles of dbaB, C, E and F have still to be determined. This is Non-reducing polyketide synthase dbaI from Emericella nidulans (strain FGSC A4 / ATCC 38163 / CBS 112.46 / NRRL 194 / M139) (Aspergillus nidulans).